The chain runs to 59 residues: Large ribosomal subunit protein uL30 (59 aa).

The protein belongs to the universal ribosomal protein uL30 family. As to quaternary structure, part of the 50S ribosomal subunit.

This is Large ribosomal subunit protein uL30 from Sodalis glossinidius (strain morsitans).